The following is a 292-amino-acid chain: Tissue factor (292 aa).

The N-terminal stretch at 1-32 (MAPPTRLQVPRPGTAVPYTVLLGWLLAQVARA) is a signal peptide. Over 33–250 (ADTTGRAYNL…SREQGRAREM (218 aa)) the chain is Extracellular. 2 Fibronectin type-III domains span residues 35–126 (TTGR…PFRN) and 148–240 (QVGT…TECT). Asn-41 is a glycosylation site (N-linked (GlcNAc...) asparagine). 2 short sequence motifs (WKS motif) span residues 44–46 (WKS) and 75–77 (WKS). A disulfide bridge connects residues Cys-79 and Cys-87. Asn-114, Asn-154, Asn-167, and Asn-182 each carry an N-linked (GlcNAc...) asparagine glycan. Cys-216 and Cys-239 form a disulfide bridge. Residues 251-271 (FFIIGAVVVVALLIIVLSVTV) form a helical membrane-spanning segment. Residues 272-292 (YKCRKARAGPSGKESSPLNIA) lie on the Cytoplasmic side of the membrane. The S-palmitoyl cysteine moiety is linked to residue Cys-274.

Belongs to the tissue factor family. In terms of assembly, interacts with HSPE; the interaction, inhibited by heparin, promotes the generation of activated factor X and activates coagulation in the presence of activated factor VII. In terms of tissue distribution, brain, heart.

It is found in the membrane. Functionally, initiates blood coagulation by forming a complex with circulating factor VII or VIIa. The [TF:VIIa] complex activates factors IX or X by specific limited proteolysis. TF plays a role in normal hemostasis by initiating the cell-surface assembly and propagation of the coagulation protease cascade. In Oryctolagus cuniculus (Rabbit), this protein is Tissue factor (F3).